The sequence spans 255 residues: Small ribosomal subunit protein uS10m (255 aa).

A mitochondrion-targeting transit peptide spans 1–32 (MALPAARSALSARAFIRPAAALNAAASSSRYL). 2 disordered regions span residues 30–52 (RYLSTTTPRHDAPVATTPGNSET) and 220–255 (SEGEGEDQAEGVQKIVDAAREEKPAEKLKEEEAKSS). The span at 236–255 (DAAREEKPAEKLKEEEAKSS) shows a compositional bias: basic and acidic residues.

This sequence belongs to the universal ribosomal protein uS10 family. In terms of assembly, part of the mitochondrial small ribosomal subunit.

The protein localises to the mitochondrion. Functionally, involved in mitochondrial genome encoded proteins translation. Involved in the binding of tRNA to the ribosomes. The sequence is that of Small ribosomal subunit protein uS10m (RSM10) from Cryptococcus neoformans var. neoformans serotype D (strain B-3501A) (Filobasidiella neoformans).